The primary structure comprises 358 residues: Peroxidase 12 (358 aa).

An N-terminal signal peptide occupies residues 1–31 (MTKAYSTRVLTFLILISLMAVTLNLFPTVEA). 4 disulfide bridges follow: cysteine 53-cysteine 134, cysteine 86-cysteine 91, cysteine 140-cysteine 335, and cysteine 220-cysteine 247. Histidine 84 acts as the Proton acceptor in catalysis. Residues aspartate 85, valine 88, glycine 90, glutamate 92, and serine 94 each coordinate Ca(2+). Residue proline 183 coordinates substrate. 2 N-linked (GlcNAc...) asparagine glycosylation sites follow: asparagine 188 and asparagine 202. Position 213 (histidine 213) interacts with heme b. A Ca(2+)-binding site is contributed by threonine 214. Asparagine 251 carries N-linked (GlcNAc...) asparagine glycosylation. Residues aspartate 259, serine 262, and aspartate 267 each coordinate Ca(2+). An N-linked (GlcNAc...) asparagine glycan is attached at asparagine 334.

The protein belongs to the peroxidase family. Classical plant (class III) peroxidase subfamily. It depends on heme b as a cofactor. Requires Ca(2+) as cofactor. As to expression, expressed in roots and leaves.

The protein localises to the secreted. The protein resides in the vacuole. The enzyme catalyses 2 a phenolic donor + H2O2 = 2 a phenolic radical donor + 2 H2O. Functionally, removal of H(2)O(2), oxidation of toxic reductants, biosynthesis and degradation of lignin, suberization, auxin catabolism, response to environmental stresses such as wounding, pathogen attack and oxidative stress. These functions might be dependent on each isozyme/isoform in each plant tissue. Exhibits a Ca(2+)-pectate binding affinity which could be interpreted in vivo as a specificity to interact with the pectic structure of the cell wall. The polypeptide is Peroxidase 12 (PER12) (Arabidopsis thaliana (Mouse-ear cress)).